The following is a 366-amino-acid chain: Mannonate dehydratase (366 aa).

It belongs to the mannonate dehydratase family. Requires Fe(2+) as cofactor. Mn(2+) is required as a cofactor.

It carries out the reaction D-mannonate = 2-dehydro-3-deoxy-D-gluconate + H2O. It participates in carbohydrate metabolism; pentose and glucuronate interconversion. Functionally, catalyzes the dehydration of D-mannonate. The chain is Mannonate dehydratase from Streptococcus pneumoniae (strain 70585).